The following is a 636-amino-acid chain: Translation factor GUF1 homolog, chloroplastic (636 aa).

One can recognise a tr-type G domain in the interval 31 to 212; that stretch reads NLARNFSIIA…AIVTKIPPPQ (182 aa). Residues 40-47, 105-109, and 159-162 each bind GTP; these read AHIDHGKS, DTPGH, and NKID.

It belongs to the TRAFAC class translation factor GTPase superfamily. Classic translation factor GTPase family. LepA subfamily.

It is found in the plastid. The protein resides in the chloroplast. It carries out the reaction GTP + H2O = GDP + phosphate + H(+). Its function is as follows. Promotes chloroplast protein synthesis. May act as a fidelity factor of the translation reaction, by catalyzing a one-codon backward translocation of tRNAs on improperly translocated ribosomes. The chain is Translation factor GUF1 homolog, chloroplastic from Oryza sativa subsp. indica (Rice).